Here is a 294-residue protein sequence, read N- to C-terminus: 2,4-diacetylphloroglucinol hydrolase (294 aa).

4 residues coordinate Zn(2+): histidine 129, glutamate 160, histidine 270, and glutamate 274.

The protein belongs to the DAPG/phloretin hydrolase family. As to quaternary structure, homodimer. Zn(2+) is required as a cofactor.

It catalyses the reaction 2,4-diacetylphloroglucinol + H2O = 2-acetylphloroglucinol + acetate. Specifically and significantly activated by CoCl(2). Competitively inhibited by MAPG, but not by 2-hydroxy- and 4-hydroxyacetophenone. In terms of biological role, hydrolase that specifically degrades the potent antimicrobial compound 2,4-diacetylphloroglucinol (DAPG) to equimolar amounts of mildly toxic monoacetylphloroglucinol (MAPG) and acetate. The chain is 2,4-diacetylphloroglucinol hydrolase from Pseudomonas sp.